Reading from the N-terminus, the 406-residue chain is Probable delta-aminolevulinic acid dehydratase 2, chloroplastic (406 aa).

The transit peptide at 1–34 directs the protein to the chloroplast; that stretch reads MTSSMFRSPCKIPSVKGFEQKSYVGLKAASYNVR. The active-site Schiff-base intermediate with substrate is the Lys275. The 5-aminolevulinate site is built by Arg285 and Lys291. Residue Glu307 coordinates Mg(2+). The Schiff-base intermediate with substrate role is filled by Lys322. 2 residues coordinate 5-aminolevulinate: Ser348 and Tyr387.

It belongs to the ALAD family. Homooctamer. The cofactor is Mg(2+).

It localises to the plastid. The protein resides in the chloroplast. The catalysed reaction is 2 5-aminolevulinate = porphobilinogen + 2 H2O + H(+). The protein operates within porphyrin-containing compound metabolism; protoporphyrin-IX biosynthesis; coproporphyrinogen-III from 5-aminolevulinate: step 1/4. Its pathway is porphyrin-containing compound metabolism; chlorophyll biosynthesis. Its function is as follows. Catalyzes an early step in the biosynthesis of tetrapyrroles. Binds two molecules of 5-aminolevulinate per subunit, each at a distinct site, and catalyzes their condensation to form porphobilinogen. This Arabidopsis thaliana (Mouse-ear cress) protein is Probable delta-aminolevulinic acid dehydratase 2, chloroplastic (HEMB2).